We begin with the raw amino-acid sequence, 458 residues long: Exodeoxyribonuclease 7 large subunit (458 aa).

Belongs to the XseA family. Heterooligomer composed of large and small subunits.

The protein localises to the cytoplasm. The enzyme catalyses Exonucleolytic cleavage in either 5'- to 3'- or 3'- to 5'-direction to yield nucleoside 5'-phosphates.. In terms of biological role, bidirectionally degrades single-stranded DNA into large acid-insoluble oligonucleotides, which are then degraded further into small acid-soluble oligonucleotides. This is Exodeoxyribonuclease 7 large subunit from Escherichia coli O17:K52:H18 (strain UMN026 / ExPEC).